The chain runs to 565 residues: MAAIESFDNIYLDLSKESGKSRFAENGLGWKPAGGGEAFTLDSSNIGGAQWSRAARGYEVKILLRSSGVVQLDGFHQEDYERLSKIFKNWYSVNLENKEHSLRGWNWGKAEFSKAELTFNVQNRPAFEIPYSEISNTNLAGRNEIAVEFAGNDGGKSNGHSGTGGKGKKASAGKDQLVEVRFYIPGTTTRKEAEGGEAGSDADEEEKNAVTLFYDTLIEKAEIGETAGDTIATFLDVLHLTPRGRFDIDMYDASFRLRGKTYDYKIQYDAIKKFMVLPKPDDLHFLLCIGLDPPLRQGQTRYPFVVMQFKADEEVTLDLNITEEELNGKYKDKLQSHYEQPLHQVVAYIFKGLANKKVTTPAKDFTTHRQQYGIKCSIKASEGFLYCLEKAFMFVPKPATYISYEQTQSITFSRVGGAVSALSTFDITVHMKNGAGSSQFSNINREDLKALEEFFKLKGLRVKNEIDDDTNLIAAALGDDDMASSDEEAVGPKADRGSADEDEESVDEDFQAESESDVAEEYDSNHESDGSGSEESDVDNRVDDEDEDMDDDEGEKRPKKKKKTA.

Disordered regions lie at residues 151–173 (GNDG…ASAG) and 477–565 (LGDD…KKTA). The span at 152–165 (NDGGKSNGHSGTGG) shows a compositional bias: gly residues. Composition is skewed to acidic residues over residues 478 to 489 (GDDDMASSDEEA), 500 to 522 (DEDE…AEEY), and 532 to 553 (GSEE…DDDE).

The protein belongs to the SSRP1 family. As to quaternary structure, forms a stable heterodimer with ctc-2/spt16. The dimer of ctc-1 and ctc-2 weakly associates with multiple molecules of nhp-1/nhp6 to form the FACT complex.

It localises to the nucleus. The protein localises to the chromosome. Its function is as follows. Component of the FACT complex, a general chromatin factor that acts to reorganize nucleosomes. The FACT complex is involved in multiple processes that require DNA as a template such as mRNA elongation, DNA replication and DNA repair. During transcription elongation the FACT complex acts as a histone chaperone that both destabilizes and restores nucleosomal structure. It facilitates the passage of RNA polymerase II and transcription by promoting the dissociation of one histone H2A-H2B dimer from the nucleosome, then subsequently promotes the reestablishment of the nucleosome following the passage of RNA polymerase II. In Neurospora crassa (strain ATCC 24698 / 74-OR23-1A / CBS 708.71 / DSM 1257 / FGSC 987), this protein is FACT complex subunit ctc-1 (ctc-1).